The chain runs to 186 residues: Transposons Tn1721 resolvase (186 aa).

In terms of domain architecture, Resolvase/invertase-type recombinase catalytic spans 4-137 (HRIGYVRVSS…EGIALAKQRG (134 aa)). Residue Ser12 is the O-(5'-phospho-DNA)-serine intermediate of the active site. Residues 164–183 (KAQLAREFNISRETLYQYLR) constitute a DNA-binding region (H-T-H motif).

The protein belongs to the site-specific recombinase resolvase family.

In terms of biological role, resolvase catalyzes the resolution (a site-specific recombination) of the cointegrated replicon to yield the final transposition products. This Escherichia coli protein is Transposons Tn1721 resolvase (tnpR).